The sequence spans 275 residues: MASLQTQMISFYLIFLSILLTTIFFFKVNSTETTSFSITKFSPDQKNLIFQGDGYTTKGKLTLTKAVKSTVGRALYSTPIHIWDRDTGNVANFVTSFTFVIDAPSSYNVADEFTFFIAPVDTKPQTGGGYLGVFNSKEYDKTSQTVAVEFDTFYNAAWDPSNKERHIGIDVNSIKSVNTKSWNLQNGERANVVIAFNAATNVLTVTLTYPNSLEEENVTSYTLNEVVPLKDVVPEWVRIGFSATTGAEFAAHEVHSWSFHSELGGTSSSKQAADA.

An N-terminal signal peptide occupies residues 1–30; it reads MASLQTQMISFYLIFLSILLTTIFFFKVNS. Residues Asp111 and Gly129 each contribute to the D-glucose site. Residues Glu149 and Asp151 each coordinate Mn(2+). Ca(2+)-binding residues include Asp151, Phe153, Asn155, and Asp159. Positions 159 and 166 each coordinate Mn(2+). Residues 211–217 constitute a propeptide that is removed on maturation; that stretch reads NSLEEEN. Residues Gly246 and Ala247 each coordinate D-glucose. Residues 270–275 constitute a propeptide that is removed on maturation; it reads KQAADA.

This sequence belongs to the leguminous lectin family. As to quaternary structure, heterotetramer of two alpha and two beta chains. In terms of processing, the mature form consists of two chains, alpha and beta, produced by cleavage of the immature protein. These remain cleaved, yet fold together to form one subunit.

D-mannose specific lectin. This chain is Lectin, found in Lens culinaris (Lentil).